The chain runs to 120 residues: Protein p14.5 (120 aa).

2 disordered regions span residues 1-27 (MADFNSPIQYLKEDSRDRTSIGSLEYD) and 80-120 (REFT…HKSK). N-acetylalanine; by host is present on Ala-2. The span at 103–120 (KPKKKKHLFPKLSSHKSK) shows a compositional bias: basic residues.

The protein belongs to the asfivirus structural protein p14.5 family. In terms of assembly, interacts with the major capsid protein. Interacts with host IRF3; this interaction interferes with the recruitment of IRF3 to TBK1. Acetylated.

The protein localises to the virion. Functionally, structural protein required for transport of intracellular particles from the assembly sites to the plasma membrane. Binds to both ssDNA and dsDNA. Suppressed the activation of the cGAS/STING pathway by interfering with the recruitment of IRF3 to TBK1, which in turn suppresses IRF3 phosphorylation, decreasing interferon production. This is Protein p14.5 from Ornithodoros (relapsing fever ticks).